A 144-amino-acid chain; its full sequence is Single-stranded DNA-binding protein 3 (144 aa).

Residues 1 to 103 (MNKVVLIGRL…IVAEEVQFLE (103 aa)) enclose the SSB domain. Over residues 112 to 134 (MANDQFNNGNENGSMQLPDNNDI) the composition is skewed to polar residues. The disordered stretch occupies residues 112–144 (MANDQFNNGNENGSMQLPDNNDITPIDDGDIPF).

In terms of assembly, homotetramer.

The chain is Single-stranded DNA-binding protein 3 (ssb3) from Clostridium acetobutylicum (strain ATCC 824 / DSM 792 / JCM 1419 / IAM 19013 / LMG 5710 / NBRC 13948 / NRRL B-527 / VKM B-1787 / 2291 / W).